Consider the following 287-residue polypeptide: Cyclopropane mycolic acid synthase 3 (287 aa).

S-adenosyl-L-methionine is bound by residues 33–34 (YS), 68–76 (LLDIGCGWG), 94–99 (TLSENQ), and 123–124 (WE). Cys-269 is an active-site residue.

It belongs to the CFA/CMAS family. As to quaternary structure, homodimer.

Its subcellular location is the cytoplasm. The catalysed reaction is a 1-acyl-2-(9Z)-enoyl-sn-glycero-3-phospholipid + S-adenosyl-L-methionine = a 1-acyl-2-(9-cyclopronane)-acyl-sn-glycero-3-phospholipid + S-adenosyl-L-homocysteine + H(+). It participates in lipid metabolism; mycolic acid biosynthesis. Involved in the phagosome maturation block (PMB). Catalyzes the conversion of a double bond to a cyclopropane ring at the proximal position of an alpha mycolic acid via the transfer of a methylene group from S-adenosyl-L-methionine. It can use cis, cis 11,14-eicosadienoic acid and linoelaidic acid as substrate. Cyclopropanated mycolic acids are key factors participating in cell envelope permeability, host immunomodulation and persistence. This Mycobacterium tuberculosis (strain CDC 1551 / Oshkosh) protein is Cyclopropane mycolic acid synthase 3 (pcaA).